The chain runs to 98 residues: UPF0235 protein APJL_1398 (98 aa).

The protein belongs to the UPF0235 family.

This Actinobacillus pleuropneumoniae serotype 3 (strain JL03) protein is UPF0235 protein APJL_1398.